Reading from the N-terminus, the 582-residue chain is UPF0329 protein ECU07_0070 (582 aa).

The tract at residues 326-386 (EEKAKSKKKG…KTGKKSKGDQ (61 aa)) is disordered. The segment covering 330–339 (KSKKKGKKKS) has biased composition (basic residues). Residues 344–354 (EAKEEEKKESG) show a composition bias toward basic and acidic residues.

It belongs to the UPF0329 family.

This Encephalitozoon cuniculi (strain GB-M1) (Microsporidian parasite) protein is UPF0329 protein ECU07_0070.